Consider the following 438-residue polypeptide: Carboxypeptidase A6 (438 aa).

Positions 1 to 30 (MNFLGNPRSHTAAFLPVCWLLLNILKPGHC) are cleaved as a signal peptide. Positions 31–129 (HSYDNRYAGD…NSLQTQRNRR (99 aa)) are cleaved as a propeptide — activation peptide. N-linked (GlcNAc...) asparagine glycosylation is found at Asn-89 and Asn-153. The 296-residue stretch at 138-433 (VYHSLEDIQS…LAVKNITMHL (296 aa)) folds into the Peptidase M14 domain. Positions 197 and 200 each coordinate Zn(2+). Residues 197–200 (HARE), Arg-255, and 272–273 (NR) each bind substrate. Cys-266 and Cys-289 are joined by a disulfide. His-325 is a binding site for Zn(2+). 326-327 (AY) contributes to the substrate binding site. The N-linked (GlcNAc...) asparagine glycan is linked to Asn-344. Tyr-377 contributes to the substrate binding site. Glu-399 functions as the Proton donor/acceptor in the catalytic mechanism. Asn-428 carries N-linked (GlcNAc...) asparagine glycosylation.

This sequence belongs to the peptidase M14 family. Zn(2+) is required as a cofactor. In brain, highly expressed in the olfactory bulb with lower levels in other regions including cerebral cortex, hippocampus, hypothalamus, striatum and medulla. Within the olfactory bulb, highest levels occur in the mitral and granular layers with lower levels in the internal and external plexiform layers. Moderate levels are found in the epididymis with low levels in colon and spleen. Not detected in adrenal, liver, lung, ovary or testis. At embryonic day 14.5, enriched in eye, ear, osteoblasts, stomach, skin, dorsal root ganglia and throughout the CNS.

The protein resides in the secreted. Its subcellular location is the extracellular space. The protein localises to the extracellular matrix. In terms of biological role, may be involved in the proteolytic inactivation of enkephalins and neurotensin in some brain areas. May convert inactive angiotensin I into the biologically active angiotensin II. Releases a C-terminal amino acid, with preference for large hydrophobic C-terminal amino acids and shows only very weak activity toward small amino acids and histidine. The chain is Carboxypeptidase A6 (Cpa6) from Mus musculus (Mouse).